A 235-amino-acid polypeptide reads, in one-letter code: Ribitol-5-phosphate cytidylyltransferase (235 aa).

CTP is bound by residues 7–10 (LAGG), 82–88 (GADRNTS), and S113.

Belongs to the IspD/TarI cytidylyltransferase family. TarI subfamily.

The enzyme catalyses D-ribitol 5-phosphate + CTP + H(+) = CDP-L-ribitol + diphosphate. It participates in cell wall biogenesis; poly(ribitol phosphate) teichoic acid biosynthesis. Catalyzes the transfer of the cytidylyl group of CTP to D-ribitol 5-phosphate. The polypeptide is Ribitol-5-phosphate cytidylyltransferase (Streptococcus pneumoniae (strain CGSP14)).